A 494-amino-acid polypeptide reads, in one-letter code: Cysteine--tRNA ligase (494 aa).

C29 is a Zn(2+) binding site. Positions 31–41 (VTVYDHCHIGH) match the 'HIGH' region motif. The Zn(2+) site is built by C209, H234, and E238. The 'KMSKS' region signature appears at 266–270 (KMSKS). K269 lines the ATP pocket.

This sequence belongs to the class-I aminoacyl-tRNA synthetase family. In terms of assembly, monomer. It depends on Zn(2+) as a cofactor.

It localises to the cytoplasm. It catalyses the reaction tRNA(Cys) + L-cysteine + ATP = L-cysteinyl-tRNA(Cys) + AMP + diphosphate. In Geotalea uraniireducens (strain Rf4) (Geobacter uraniireducens), this protein is Cysteine--tRNA ligase.